A 348-amino-acid chain; its full sequence is Anthranilate phosphoribosyltransferase (348 aa).

Residues Gly81, 84–85 (GD), 91–94 (NVST), 109–117 (KHGNRAVSG), and Ser121 each bind 5-phospho-alpha-D-ribose 1-diphosphate. Residue Gly81 coordinates anthranilate. Position 93 (Ser93) interacts with Mg(2+). Position 112 (Asn112) interacts with anthranilate. Arg167 lines the anthranilate pocket. Mg(2+)-binding residues include Asp226 and Glu227.

It belongs to the anthranilate phosphoribosyltransferase family. As to quaternary structure, homodimer. It depends on Mg(2+) as a cofactor.

The catalysed reaction is N-(5-phospho-beta-D-ribosyl)anthranilate + diphosphate = 5-phospho-alpha-D-ribose 1-diphosphate + anthranilate. The protein operates within amino-acid biosynthesis; L-tryptophan biosynthesis; L-tryptophan from chorismate: step 2/5. Functionally, catalyzes the transfer of the phosphoribosyl group of 5-phosphorylribose-1-pyrophosphate (PRPP) to anthranilate to yield N-(5'-phosphoribosyl)-anthranilate (PRA). The chain is Anthranilate phosphoribosyltransferase from Stutzerimonas stutzeri (strain A1501) (Pseudomonas stutzeri).